Reading from the N-terminus, the 1031-residue chain is MDILYRPMLLSIYVCRASRTVLANIFVSFSGFLGERKAFEVYSCDVSPDGSRLVTAAGDGYVRIWSTEAICGAEDANKPKQLASMSNHSGTIHTVRFSPNGKYLASGADDKIVCIYTLDANPPSHAASFGSNEAPPVENWRTIRRLIGHDNDVQDLGWSCDSSILVSVGLDSKVVVWSGHTFEKLKTLSVHQSHVKGITFDPANKYFATASDDRTVRIFRFTSPAPNSTAHDQMNNFVLEQTITAPFQNSPLTAYFRRCSWSPDGLHIAAANAVNGPVSSVAIINRGGWDGDINLIGHEAPVEVCAFSPRLYSPQPIKKNQQDSHDHVAQAPVTVIACAGGDKSLSVWITSNPRPIVVAQELAAKSISDLAWSPDGSCLYATALDGTILAVRFEDGDLGYAMELEENEKSLTKFGTNRKGAGIAETTDGLLLEEKSKAGELKGVEGRMGALMGDGHATGDAVANGKPTPLPSTSNGVTPAAPSPSTDAQKSQPNGTAAPSASETEKPDPYQAKLERLKQRPTYTKDGKKRIAPLLVSGAGGAESSLPQARLMASVSSQVKADTPQSIVDLSKPFDGLPKGGLATLLFGNKRKLAQLEDEEDGHTEKRVALASQNGATPILTSAPEGLLPAQPQDPPTGQQPTPEFIRPAVVNPCMSVSQLRLAVPKVRTHIVRAIDSAGKPTEPPSTSGESNKSRVDVVFEARNPSGASLTGRAADREPVRLTLFRGEQPLWQDFLPRTVLLVTGNQNMWSAACEDGSVYIWTPAGRRLVSALVLEAQPVILECNGPWILSISAVGMCYVWNVEHLSSPHPPVSLQPVLDAAIHTLGAHPSAAPSITNARINSEGRIIIALSNGEGYAYSPSLYTWQRLSEAWWAVGSQYWNSTEAPVGNLQSASNTQQKDKDARAAVSAGIIPFLERNTTNETLLRGRAYFLQRLIKTLLSREGYESFESSVSIAHLENRLAGALSLGAKEEFRLYLSMYAKRIGAEGLRGKVEELLKGKHRDLQRVTVPYAKLLGVVDNESDANDAMEL.

WD repeat units follow at residues 36–75 (RKAF…GAED), 87–126 (NHSG…PSHA), 148–187 (GHDN…KLKT), 190–229 (VHQS…PNST), 251–294 (PLTA…GDIN), 297–358 (GHEA…PIVV), and 362–403 (LAAK…YAME). Disordered stretches follow at residues 449–529 (GALM…DGKK), 618–643 (PILT…QPTP), and 675–695 (IDSA…NKSR). Polar residues predominate over residues 471–502 (PSTSNGVTPAAPSPSTDAQKSQPNGTAAPSAS). Residues 503–526 (ETEKPDPYQAKLERLKQRPTYTKD) are compositionally biased toward basic and acidic residues.

The protein belongs to the WD repeat HIR1 family.

Its subcellular location is the nucleus. Its function is as follows. Required for replication-independent chromatin assembly and for the periodic repression of histone gene transcription during the cell cycle. In Emericella nidulans (strain FGSC A4 / ATCC 38163 / CBS 112.46 / NRRL 194 / M139) (Aspergillus nidulans), this protein is Protein hir1 (hir1).